Here is a 359-residue protein sequence, read N- to C-terminus: Phospho-N-acetylmuramoyl-pentapeptide-transferase (359 aa).

10 helical membrane-spanning segments follow: residues 3–23 (QIMIAVAIAVAVSILLTPALI), 55–75 (VAILAGIWAGYFGTHLAGLAF), 80–100 (ITASGLLVLGLATSLGGVGFL), 117–137 (TAKTVGQITSAVLFAVLVLQF), 156–176 (IATVTLTPALFVLFCVLVVSA), 187–207 (LDGLAAGCMAMVTGAYVLITF), 231–251 (LALIAAATAGACIGFLWWNAA), 255–275 (IFMGDTGSLALGGIIAGLSVT), 280–300 (ILAVVLGALFVAEITSVVLQI), and 334–354 (FWLLTAITCGLGVALFYGEWL).

This sequence belongs to the glycosyltransferase 4 family. MraY subfamily. Requires Mg(2+) as cofactor.

The protein localises to the cell inner membrane. The enzyme catalyses UDP-N-acetyl-alpha-D-muramoyl-L-alanyl-gamma-D-glutamyl-meso-2,6-diaminopimeloyl-D-alanyl-D-alanine + di-trans,octa-cis-undecaprenyl phosphate = di-trans,octa-cis-undecaprenyl diphospho-N-acetyl-alpha-D-muramoyl-L-alanyl-D-glutamyl-meso-2,6-diaminopimeloyl-D-alanyl-D-alanine + UMP. It participates in cell wall biogenesis; peptidoglycan biosynthesis. Catalyzes the initial step of the lipid cycle reactions in the biosynthesis of the cell wall peptidoglycan: transfers peptidoglycan precursor phospho-MurNAc-pentapeptide from UDP-MurNAc-pentapeptide onto the lipid carrier undecaprenyl phosphate, yielding undecaprenyl-pyrophosphoryl-MurNAc-pentapeptide, known as lipid I. The protein is Phospho-N-acetylmuramoyl-pentapeptide-transferase of Mycobacterium marinum (strain ATCC BAA-535 / M).